The following is a 309-amino-acid chain: Elongation factor Ts (309 aa).

Residues 82-85 (TDFV) form an involved in Mg(2+) ion dislocation from EF-Tu region.

The protein belongs to the EF-Ts family.

Its subcellular location is the cytoplasm. Its function is as follows. Associates with the EF-Tu.GDP complex and induces the exchange of GDP to GTP. It remains bound to the aminoacyl-tRNA.EF-Tu.GTP complex up to the GTP hydrolysis stage on the ribosome. The protein is Elongation factor Ts of Rickettsia typhi (strain ATCC VR-144 / Wilmington).